Reading from the N-terminus, the 495-residue chain is BUB3-interacting and GLEBS motif-containing protein ZNF207 (495 aa).

The interval 1–92 is microtubule-binding region; the sequence is MGRKKKKQLK…EGIPEKDMDE (92 aa). C2H2-type zinc fingers lie at residues 11–34 and 35–58; these read PWCWYCNRDFDDEKILIQHQKAKH and FKCHICHKKLYTGPGLAIHCMQVH. A compositionally biased stretch (basic and acidic residues) spans 99–111; the sequence is QKTQESQKKKQQD. 3 disordered regions span residues 99–161, 252–292, and 316–372; these read QKTQ…PGIP, PPAP…SNSE, and VGTD…ATLT. Positions 112 to 121 are enriched in acidic residues; it reads DSDEYDDDES. Positions 127–136 are enriched in polar residues; sequence FQPQPVQPQQ. The span at 142–161 shows a compositional bias: pro residues; that stretch reads MAQPGLPPVPGAPGMPPGIP. Low complexity-rich tracts occupy residues 283 to 292 and 326 to 372; these read SSSTASSNSE and TPAA…ATLT. A GLEBS region spans residues 376-408; sequence ATSKLIHPDEDISLEERRAQLPKYQRNLPRPGQ. Residues 462–495 form a disordered region; it reads PYGQGPPMVPPYQGGPPRPPMGMRPPVMSQGGRY. Pro residues predominate over residues 464-484; that stretch reads GQGPPMVPPYQGGPPRPPMGM.

In terms of assembly, interacts (via GLEBS region) with BUB3. In day-13 embryo, strongly expressed in the nervous system (brain, spinal cord and dorsal root ganglia), with strong to weak expression in other regions. Continues to be strongly expressed in the neonatal brain while expression is weak in the brain and spinal cord of adult.

It localises to the nucleus. The protein localises to the chromosome. The protein resides in the centromere. It is found in the kinetochore. Its subcellular location is the cytoplasm. It localises to the cytoskeleton. The protein localises to the spindle. Kinetochore- and microtubule-binding protein that plays a key role in spindle assembly. ZNF207/BuGZ is mainly composed of disordered low-complexity regions and undergoes phase transition or coacervation to form temperature-dependent liquid droplets. Coacervation promotes microtubule bundling and concentrates tubulin, promoting microtubule polymerization and assembly of spindle and spindle matrix by concentrating its building blocks. Also acts as a regulator of mitotic chromosome alignment by mediating the stability and kinetochore loading of BUB3. Mechanisms by which BUB3 is protected are unclear: according to a first report, ZNF207/BuGZ may act by blocking ubiquitination and proteasomal degradation of BUB3. According to another report, the stabilization is independent of the proteasome. This is BUB3-interacting and GLEBS motif-containing protein ZNF207 from Mus musculus (Mouse).